The primary structure comprises 304 residues: uncharacterized protein (304 aa).

Residues 136-137, 215-217, and aspartate 241 each bind NAD(+); these read GI and VGR. Residue arginine 217 is part of the active site. Residue glutamate 246 is part of the active site. The active-site Proton donor is histidine 265. 265–268 contributes to the NAD(+) binding site; it reads HTAN.

It belongs to the D-isomer specific 2-hydroxyacid dehydrogenase family.

This is an uncharacterized protein from Corynebacterium melassecola.